Consider the following 86-residue polypeptide: Small ribosomal subunit protein bS20 (86 aa).

A disordered region spans residues 1-26 (MANIKSAKKRAITSEKRRQHNASRRS).

This sequence belongs to the bacterial ribosomal protein bS20 family.

Its function is as follows. Binds directly to 16S ribosomal RNA. This chain is Small ribosomal subunit protein bS20, found in Photobacterium profundum (strain SS9).